The primary structure comprises 283 residues: Bis(5'-nucleosyl)-tetraphosphatase, symmetrical (283 aa).

Belongs to the Ap4A hydrolase family.

The catalysed reaction is P(1),P(4)-bis(5'-adenosyl) tetraphosphate + H2O = 2 ADP + 2 H(+). Hydrolyzes diadenosine 5',5'''-P1,P4-tetraphosphate to yield ADP. The chain is Bis(5'-nucleosyl)-tetraphosphatase, symmetrical from Serratia proteamaculans (strain 568).